Reading from the N-terminus, the 601-residue chain is Elongation factor 4 (601 aa).

A tr-type G domain is found at 5-187; the sequence is DKIRNFSIIA…SIVKDLPAPQ (183 aa). GTP-binding positions include 17 to 22 and 134 to 137; these read DHGKST and NKVD.

This sequence belongs to the TRAFAC class translation factor GTPase superfamily. Classic translation factor GTPase family. LepA subfamily.

The protein localises to the cell inner membrane. The enzyme catalyses GTP + H2O = GDP + phosphate + H(+). Functionally, required for accurate and efficient protein synthesis under certain stress conditions. May act as a fidelity factor of the translation reaction, by catalyzing a one-codon backward translocation of tRNAs on improperly translocated ribosomes. Back-translocation proceeds from a post-translocation (POST) complex to a pre-translocation (PRE) complex, thus giving elongation factor G a second chance to translocate the tRNAs correctly. Binds to ribosomes in a GTP-dependent manner. The chain is Elongation factor 4 from Maridesulfovibrio salexigens (strain ATCC 14822 / DSM 2638 / NCIMB 8403 / VKM B-1763) (Desulfovibrio salexigens).